The following is a 508-amino-acid chain: Photosystem II CP47 reaction center protein (508 aa).

Helical transmembrane passes span 21 to 36 (SVHIMHTALVSGWAGS), 101 to 115 (IVFSGLCFLAAIWHW), 140 to 156 (GIHLFLSGVTCFGFGAF), 203 to 218 (IAAGTLGILAGLFHLS), 237 to 252 (VLSSSIAAVFFAAFVV), and 457 to 472 (TFALLFFFGHIWHGAR).

The protein belongs to the PsbB/PsbC family. PsbB subfamily. In terms of assembly, PSII is composed of 1 copy each of membrane proteins PsbA, PsbB, PsbC, PsbD, PsbE, PsbF, PsbH, PsbI, PsbJ, PsbK, PsbL, PsbM, PsbT, PsbX, PsbY, PsbZ, Psb30/Ycf12, at least 3 peripheral proteins of the oxygen-evolving complex and a large number of cofactors. It forms dimeric complexes. It depends on Binds multiple chlorophylls. PSII binds additional chlorophylls, carotenoids and specific lipids. as a cofactor.

It is found in the plastid. The protein resides in the chloroplast thylakoid membrane. In terms of biological role, one of the components of the core complex of photosystem II (PSII). It binds chlorophyll and helps catalyze the primary light-induced photochemical processes of PSII. PSII is a light-driven water:plastoquinone oxidoreductase, using light energy to abstract electrons from H(2)O, generating O(2) and a proton gradient subsequently used for ATP formation. The protein is Photosystem II CP47 reaction center protein of Drimys granadensis.